Consider the following 394-residue polypeptide: 1-deoxy-D-xylulose 5-phosphate reductoisomerase (394 aa).

NADPH contacts are provided by Thr28, Gly29, Ser30, Ile31, Asn57, and Asn133. Lys134 provides a ligand contact to 1-deoxy-D-xylulose 5-phosphate. Glu135 is an NADPH binding site. Mn(2+) is bound at residue Asp157. Residues Ser158, Glu159, Ser183, and His206 each coordinate 1-deoxy-D-xylulose 5-phosphate. A Mn(2+)-binding site is contributed by Glu159. Gly212 is an NADPH binding site. Residues Ser219, Asn224, Lys225, and Glu228 each coordinate 1-deoxy-D-xylulose 5-phosphate. Mn(2+) is bound at residue Glu228.

Belongs to the DXR family. Mg(2+) serves as cofactor. It depends on Mn(2+) as a cofactor.

It carries out the reaction 2-C-methyl-D-erythritol 4-phosphate + NADP(+) = 1-deoxy-D-xylulose 5-phosphate + NADPH + H(+). Its pathway is isoprenoid biosynthesis; isopentenyl diphosphate biosynthesis via DXP pathway; isopentenyl diphosphate from 1-deoxy-D-xylulose 5-phosphate: step 1/6. Its function is as follows. Catalyzes the NADPH-dependent rearrangement and reduction of 1-deoxy-D-xylulose-5-phosphate (DXP) to 2-C-methyl-D-erythritol 4-phosphate (MEP). This Nocardia farcinica (strain IFM 10152) protein is 1-deoxy-D-xylulose 5-phosphate reductoisomerase.